Reading from the N-terminus, the 165-residue chain is Large ribosomal subunit protein eL15 (165 aa).

The segment at 126–147 (TSAGRKSRGLGKGHKFHHTIGG) is disordered. The span at 130–143 (RKSRGLGKGHKFHH) shows a compositional bias: basic residues.

Belongs to the eukaryotic ribosomal protein eL15 family. In terms of assembly, component of the large ribosomal subunit.

It is found in the cytoplasm. Component of the large ribosomal subunit. The ribosome is a large ribonucleoprotein complex responsible for the synthesis of proteins in the cell. This is Large ribosomal subunit protein eL15 (RPL15) from Gallus gallus (Chicken).